Reading from the N-terminus, the 225-residue chain is NAD(P)H-quinone oxidoreductase subunit K, chloroplastic (225 aa).

C43, C44, C108, and C139 together coordinate [4Fe-4S] cluster.

Belongs to the complex I 20 kDa subunit family. NDH is composed of at least 16 different subunits, 5 of which are encoded in the nucleus. [4Fe-4S] cluster serves as cofactor.

Its subcellular location is the plastid. It localises to the chloroplast thylakoid membrane. The catalysed reaction is a plastoquinone + NADH + (n+1) H(+)(in) = a plastoquinol + NAD(+) + n H(+)(out). The enzyme catalyses a plastoquinone + NADPH + (n+1) H(+)(in) = a plastoquinol + NADP(+) + n H(+)(out). In terms of biological role, NDH shuttles electrons from NAD(P)H:plastoquinone, via FMN and iron-sulfur (Fe-S) centers, to quinones in the photosynthetic chain and possibly in a chloroplast respiratory chain. The immediate electron acceptor for the enzyme in this species is believed to be plastoquinone. Couples the redox reaction to proton translocation, and thus conserves the redox energy in a proton gradient. The sequence is that of NAD(P)H-quinone oxidoreductase subunit K, chloroplastic from Carica papaya (Papaya).